The primary structure comprises 479 residues: Cobyric acid synthase (479 aa).

Residues 250 to 442 form the GATase cobBQ-type domain; the sequence is TRTVAVVAYP…LHGLFEDAAA (193 aa). Cysteine 331 (nucleophile) is an active-site residue. Residue histidine 434 is part of the active site.

It belongs to the CobB/CobQ family. CobQ subfamily.

It functions in the pathway cofactor biosynthesis; adenosylcobalamin biosynthesis. Its function is as follows. Catalyzes amidations at positions B, D, E, and G on adenosylcobyrinic A,C-diamide. NH(2) groups are provided by glutamine, and one molecule of ATP is hydrogenolyzed for each amidation. In Variovorax paradoxus (strain S110), this protein is Cobyric acid synthase.